The sequence spans 208 residues: Mitochondrial import inner membrane translocase subunit Tim23 (208 aa).

A run of 3 helical transmembrane segments spans residues 73 to 93, 125 to 145, and 173 to 193; these read FELAFFTIGGCCITGAAFGTL, ASWANTLGSVALLYSVFGVAI, and GLKGVARGGLIGLAMSGLYAL.

It belongs to the Tim17/Tim22/Tim23 family. Component of the TIM23 complex at least composed of timm23, timm17 and timm50. The complex interacts with the timm44 component of the PAM complex.

The protein localises to the mitochondrion inner membrane. In terms of biological role, essential component of the TIM23 complex, a complex that mediates the translocation of transit peptide-containing proteins across the mitochondrial inner membrane. Plays an essential role in early embryonic development. In Danio rerio (Zebrafish), this protein is Mitochondrial import inner membrane translocase subunit Tim23 (timm23).